The sequence spans 1042 residues: FHIP family protein AAEL005291 (1042 aa).

Positions 1–14 (MSWLRSSPLRQSFS) are enriched in polar residues. 4 disordered regions span residues 1–31 (MSWLRSSPLRQSFSKAGGGSGSGASSRGGNS), 494–514 (NNTSQASSMLGSGPSSMPQGG), 821–866 (PHSG…KRND), and 905–977 (SNSS…GSPH). Polar residues predominate over residues 839–859 (VSMTSNLSQTTPMQLTPSSSY). 2 stretches are compositionally biased toward low complexity: residues 905–940 (SNSSSISHQSSSTPSPAGSQQYLSSNSSGVSSFMGS) and 956–976 (PSIGGPPSSMGPTSLTSTGSP).

It belongs to the FHIP family.

The chain is FHIP family protein AAEL005291 from Aedes aegypti (Yellowfever mosquito).